The sequence spans 131 residues: Probable flagellum biosynthesis repressor protein FlbT (131 aa).

Belongs to the FlbT family.

Its function is as follows. Has a post-transcriptional repressor function in flagellum biogenesis. Associates with the 5'-UTR of fljK mRNA and promotes its degradation. The polypeptide is Probable flagellum biosynthesis repressor protein FlbT (Caulobacter sp. (strain K31)).